A 417-amino-acid polypeptide reads, in one-letter code: Ribonuclease T2-like (417 aa).

Residues 1-22 (MSSISGFLGAIPGAQQILQTMA) form the signal peptide. 5 disulfide bridges follow: Cys-45–Cys-63, Cys-52–Cys-99, Cys-62–Cys-165, Cys-107–Cys-157, and Cys-229–Cys-264. His-92 is a catalytic residue. Asn-115 is a glycosylation site (N-linked (GlcNAc...) asparagine). Active-site residues include Glu-150 and His-154. A disordered region spans residues 274–296 (KTPNKDPGHGHEPTKTRHPHGPT). Basic and acidic residues predominate over residues 276–288 (PNKDPGHGHEPTK). The N-linked (GlcNAc...) asparagine glycan is linked to Asn-383.

This sequence belongs to the RNase T2 family.

It is found in the vacuole lumen. The protein resides in the cytoplasm. It carries out the reaction a ribonucleotidyl-ribonucleotide-RNA + H2O = a 3'-end 3'-phospho-ribonucleotide-RNA + a 5'-end dephospho-ribonucleoside-RNA + H(+). Functionally, rnase which modulates cell survival under stress conditions. Released from the vacuole to the cytoplasm during stress to promote tRNA and rRNA cleavage and to activate separately a downstream pathway that promotes cell death. Involved in cell size, vacuolar morphology and growth at high temperatures and high salt concentration. This chain is Ribonuclease T2-like (rny1), found in Emericella nidulans (strain FGSC A4 / ATCC 38163 / CBS 112.46 / NRRL 194 / M139) (Aspergillus nidulans).